The sequence spans 240 residues: Probable peptide export permease protein YydJ (240 aa).

Helical transmembrane passes span 13–33 (VIIILGAMFVFLFLLGYFLLV), 50–70 (SYTVATQFGLMLFSFVIAFFI), 97–117 (IAVLFLECFAFITLGLLIISL), 126–146 (ALLLFLFSAVILQYILIIGTI), 153–173 (ILISIGVSIVYWMTSVILVAI), and 210–230 (VLFIILYLVSIIIINAIVLRF).

As to quaternary structure, the complex is composed of 2 ATP-binding proteins (YydI), two transmembrane proteins (YydJ).

It is found in the cell membrane. Suggested to be part of an ABC transporter complex YydIJ involved in export of the modified peptide YydF. This is Probable peptide export permease protein YydJ (yydJ) from Bacillus subtilis (strain 168).